Reading from the N-terminus, the 313-residue chain is Solute carrier family 25 member 36 (313 aa).

Solcar repeat units follow at residues 4–110 (RDTL…CKEK), 118–205 (DSTQ…IKRK), and 226–310 (SDFV…VVYL). The next 6 helical transmembrane spans lie at 7 to 27 (LVHL…TCPL), 41 to 57 (LYIS…ASVN), 113 to 133 (NIFN…AGFT), 182 to 202 (MSAS…YESI), 228 to 248 (FVGM…IAYP), and 293 to 313 (QIPN…LLDG).

This sequence belongs to the mitochondrial carrier (TC 2.A.29) family.

The protein resides in the mitochondrion inner membrane. In terms of biological role, mitochondrial transporter that imports/exports pyrimidine nucleotides into and from mitochondria. Transports preferentially cytosine and uracil (deoxy)nucleoside mono-, di-, and triphosphates by uniport and antiport mechanism. This Gallus gallus (Chicken) protein is Solute carrier family 25 member 36 (SLC25A36).